Consider the following 231-residue polypeptide: CD302 antigen (231 aa).

The signal sequence occupies residues 1–21; it reads MSAAVVATLPTLLLLLGLAAA. Over 22–169 the chain is Extracellular; it reads DCPSSSWVQF…YEKKYLPDHH (148 aa). In terms of domain architecture, C-type lectin spans 31 to 153; that stretch reads FQSNCYIFLQ…CEVSSVEGAL (123 aa). The N-linked (GlcNAc...) asparagine glycan is linked to Asn-110. Cys-129 and Cys-144 are oxidised to a cystine. The chain crosses the membrane as a helical span at residues 170–190; the sequence is ILITALVIASTTILTITGAVV. Over 191-231 the chain is Cytoplasmic; that stretch reads WFLYKRNLTSGLTNTAYTTAPQLPYNDDCILVDAEENEYVA.

It is found in the membrane. It localises to the cell projection. The protein resides in the filopodium. The protein localises to the cytoplasm. Its subcellular location is the cell cortex. It is found in the microvillus. Potential multifunctional C-type lectin receptor that may play roles in endocytosis and phagocytosis as well as in cell adhesion and migration. The sequence is that of CD302 antigen from Trichosurus vulpecula (Brush-tailed possum).